A 540-amino-acid chain; its full sequence is MFDTKKVLELANKDFEKAWITTKDLIKDAPINKKYPRIKPSFGKTNPVMDTIEQLRQAYLRMGFEEYINPVIVDEKDIYKQFGPEAMAVLDRCFYLAGLPRPDIGLSNDKIEQIEKLGIKIDSNEKKENLRKTLHLYKKGVLEGDDLVYEIANSLGLSNEMGLKILEEVFPEFKNLKAESLPLTLRSHMTSGWFITISEMMGKKPLPYALFSIDRCFRREQKEDKSHLMTYHSASCVLVGEDITLDDGKAIAEGLLSQFGFTDFQFRPDEKKSKYYTPETQTEVYAYHPKLKEWLEVATFGIYSPIALSKYNISVPVMNLGLGVERLAMINHNYEDVRKMVYPQFYEQTLSDRDIAYSIKVDKVPVLDELKDLTGELIELCVKNKDKQSPCEVFIEKKIKFYNTTKTIKITLFEKEEGKNLLGPSILNKIFVHNGNIFGVPESFDNVKEEFVKVLSEAKNKGAPTNLTYIDTICYKITSKIEEALISNTKKLKIRAPIVRSLSDVNLKIDELALKQIMGNNKVIDIRGPVFLNVKCEIND.

Substrate is bound by residues 188-190, 233-235, 275-276, and N319; these read HMT, SAS, and YY.

The protein belongs to the class-II aminoacyl-tRNA synthetase family. O-phosphoseryl-tRNA(Cys) synthetase subfamily. Homotetramer. Interacts with SepCysS.

The enzyme catalyses tRNA(Cys) + O-phospho-L-serine + ATP = O-phospho-L-seryl-tRNA(Cys) + AMP + diphosphate. Its function is as follows. Catalyzes the attachment of O-phosphoserine (Sep) to tRNA(Cys). The chain is O-phosphoserine--tRNA(Cys) ligase from Methanococcus aeolicus (strain ATCC BAA-1280 / DSM 17508 / OCM 812 / Nankai-3).